Here is a 430-residue protein sequence, read N- to C-terminus: Tol-Pal system protein TolB (430 aa).

An N-terminal signal peptide occupies residues 1–21 (MKQAFRLMVGLLVLWASVLHA).

Belongs to the TolB family. The Tol-Pal system is composed of five core proteins: the inner membrane proteins TolA, TolQ and TolR, the periplasmic protein TolB and the outer membrane protein Pal. They form a network linking the inner and outer membranes and the peptidoglycan layer.

It localises to the periplasm. Part of the Tol-Pal system, which plays a role in outer membrane invagination during cell division and is important for maintaining outer membrane integrity. TolB occupies a key intermediary position in the Tol-Pal system because it communicates directly with both membrane-embedded components, Pal in the outer membrane and TolA in the inner membrane. This chain is Tol-Pal system protein TolB, found in Edwardsiella ictaluri (strain 93-146).